Here is a 156-residue protein sequence, read N- to C-terminus: MKDLTHVDEKGVKMVEVGHKDVVFRKAVAKGRIRLKPETIELIKAGKTKKGNVIAAAQIAGILAVKKTPELIPLCHPIPLTGVDITFEFGDDYIEATCEVRAYYKTGVEMEALTGVSVALLTIWDMVKAVEKDENGQYPFTRIEDIRVVEKVKGEE.

Residues 74-76 (LCH) and 110-111 (ME) contribute to the substrate site. Residue Asp-125 is part of the active site.

It belongs to the MoaC family. Homohexamer; trimer of dimers.

The catalysed reaction is (8S)-3',8-cyclo-7,8-dihydroguanosine 5'-triphosphate = cyclic pyranopterin phosphate + diphosphate. The protein operates within cofactor biosynthesis; molybdopterin biosynthesis. Functionally, catalyzes the conversion of (8S)-3',8-cyclo-7,8-dihydroguanosine 5'-triphosphate to cyclic pyranopterin monophosphate (cPMP). This Thermococcus kodakarensis (strain ATCC BAA-918 / JCM 12380 / KOD1) (Pyrococcus kodakaraensis (strain KOD1)) protein is Probable cyclic pyranopterin monophosphate synthase.